A 718-amino-acid polypeptide reads, in one-letter code: Gephyrin (718 aa).

Residues 1-19 show a composition bias toward polar residues; the sequence is MSNTLTTERNITNSPTAAQ. The disordered stretch occupies residues 1–26; the sequence is MSNTLTTERNITNSPTAAQLNEKESG. Positions 31-176 are MPT Mo-transferase; the sequence is EWIVGVLTTS…LPGSVKAIRE (146 aa). Low complexity predominate over residues 222-244; it reads NQNNQNNNNNNNNNNNNNNNNNS. 2 disordered regions span residues 222–266 and 344–364; these read NQNN…SSYN and TGEN…NDDD. The segment covering 245 to 254 has biased composition (basic residues); that stretch reads HNHHHHHHHS. The segment at 260–718 is MPT adenylyltransferase; the sequence is KRGSSYNMTP…KAILIGPINN (459 aa).

The protein in the N-terminal section; belongs to the MoaB/Mog family. This sequence in the C-terminal section; belongs to the MoeA family. Homotrimer, homodimer and homooligomer. Requires Mg(2+) as cofactor.

The protein localises to the cell membrane. Its subcellular location is the cytoplasm. It localises to the cytosol. The protein resides in the cytoskeleton. The catalysed reaction is molybdopterin + ATP + H(+) = adenylyl-molybdopterin + diphosphate. It carries out the reaction adenylyl-molybdopterin + molybdate = Mo-molybdopterin + AMP + H(+). It functions in the pathway cofactor biosynthesis; molybdopterin biosynthesis. Functionally, microtubule-associated protein involved in membrane protein-cytoskeleton interactions. Its function is as follows. Also has a catalytic activity and catalyzes two steps in the biosynthesis of the molybdenum cofactor. In the first step, molybdopterin is adenylated. Subsequently, molybdate is inserted into adenylated molybdopterin and AMP is released. This Dictyostelium discoideum (Social amoeba) protein is Gephyrin (gphn).